Consider the following 5405-residue polypeptide: IgGFc-binding protein (5405 aa).

The N-terminal stretch at M1–E23 is a signal peptide. Positions A24–A450 are igGFc-binding. N-linked (GlcNAc...) asparagine glycans are attached at residues N75 and N91. The VWFD 1 domain maps to A470 to E650. Disulfide bonds link C472/C611 and C494/C649. Positions C745–C799 constitute a TIL 1 domain. In terms of domain architecture, VWFD 2 spans G862–G1041. 2 disulfide bridges follow: C864–C1003 and C886–C1040. The region spanning C1136–C1189 is the TIL 2 domain. One can recognise a VWFD 3 domain in the interval S1250 to L1429. 2 disulfide bridges follow: C1252/C1390 and C1274/C1428. A glycan (N-linked (GlcNAc...) (complex) asparagine) is linked at N1317. One can recognise a TIL 3 domain in the interval C1532–C1585. One can recognise a VWFD 4 domain in the interval A1671–W1854. 3 disulfide bridges follow: C1673–C1815, C1695–C1853, and C1704–C1812. An N-linked (GlcNAc...) asparagine glycan is attached at N1743. The TIL 4 domain occupies C1950 to C2007. The 184-residue stretch at A2070 to T2253 folds into the VWFD 5 domain. 2 cysteine pairs are disulfide-bonded: C2072–C2211 and C2094–C2252. N-linked (GlcNAc...) asparagine glycosylation occurs at N2138. Residues C2337–C2390 enclose the TIL 5 domain. The region spanning T2451–L2630 is the VWFD 6 domain. 2 disulfide bridges follow: C2453/C2591 and C2475/C2629. N-linked (GlcNAc...) asparagine glycosylation is present at N2518. A TIL 6 domain is found at C2733–C2786. Residues A2872–W3055 enclose the VWFD 7 domain. 3 disulfides stabilise this stretch: C2874-C3016, C2896-C3054, and C2905-C3013. The region spanning C3151–C3208 is the TIL 7 domain. A VWFD 8 domain is found at A3271–T3454. 2 cysteine pairs are disulfide-bonded: C3273–C3412 and C3295–C3453. Residues C3538–C3591 enclose the TIL 8 domain. Residues T3652–L3831 form the VWFD 9 domain. 2 disulfide bridges follow: C3654/C3792 and C3676/C3830. N-linked (GlcNAc...) asparagine glycosylation is present at N3719. Positions C3934–C3987 constitute a TIL 9 domain. The VWFD 10 domain occupies A4073–W4256. 3 cysteine pairs are disulfide-bonded: C4075–C4217, C4097–C4255, and C4106–C4214. N-linked (GlcNAc...) asparagine glycosylation occurs at N4145. The TIL 10 domain occupies C4352 to C4409. A VWFD 11 domain is found at A4472–T4655. 2 disulfides stabilise this stretch: C4474–C4613 and C4496–C4654. N-linked (GlcNAc...) asparagine glycosylation is present at N4540. Residues C4739–C4792 form the TIL 11 domain. In terms of domain architecture, VWFD 12 spans G4854 to G5025. 2 cysteine pairs are disulfide-bonded: C4856–C4986 and C4878–C5024. The TIL 12 domain maps to C5121–C5174. A VWFD 13 domain is found at G5233–Y5404. An intrachain disulfide couples C5235 to C5372.

Interacts with the Fc portion of IgG and with MUC2. In terms of tissue distribution, mainly expressed in placenta and colon epithelium. Expressed in thyroid, and down-regulated in thyroid carcinomas. Present in serum, with higher levels in patients with various autoimmune diseases (at protein level).

The protein localises to the secreted. May be involved in the maintenance of the mucosal structure as a gel-like component of the mucosa. This chain is IgGFc-binding protein (FCGBP), found in Homo sapiens (Human).